The following is a 64-amino-acid chain: Large ribosomal subunit protein bL35 (64 aa).

Polar residues predominate over residues 1–10; sequence MPKMKTNSAA. The segment at 1-64 is disordered; sequence MPKMKTNSAA…AKKLHQLLQK (64 aa). A compositionally biased stretch (basic residues) spans 54 to 64; it reads QAKKLHQLLQK.

It belongs to the bacterial ribosomal protein bL35 family.

This Bifidobacterium longum (strain NCC 2705) protein is Large ribosomal subunit protein bL35.